Here is a 494-residue protein sequence, read N- to C-terminus: Probable terminase, large subunit (494 aa).

An ATP-binding site is contributed by 26–33 (ADVLFGKT). Positions 56 to 63 (SGHGTGKS) match the Walker A motif motif. The short motif at 158-163 (LYIIDE) is the Walker B motif element. Glu-163 acts as the For ATPase activity in catalysis. Mg(2+) contacts are provided by Asp-293, Asp-356, and Asp-446.

It belongs to the punalikevirus large terminase family. As to quaternary structure, interacts with pacA protein. Requires Mg(2+) as cofactor.

Component of the molecular motor that translocates genomic DNA in empty capsid during DNA packaging. Heterooligomerize with small terminase protein to be docked on capsid portal protein. Forms a ring-like structure through which genomic DNA is translocated into the capsid. May have or induce an endonuclease activity to cleave the genome concatemer after encapsidation. This is Probable terminase, large subunit (pacB) from Escherichia coli (Bacteriophage P7).